The following is a 543-amino-acid chain: Hydroxylamine reductase (543 aa).

Cysteine 3, cysteine 6, cysteine 15, and cysteine 21 together coordinate [4Fe-4S] cluster. Residues histidine 239, glutamate 263, cysteine 307, cysteine 398, cysteine 426, cysteine 451, glutamate 486, and lysine 488 each coordinate hybrid [4Fe-2O-2S] cluster. Position 398 is a cysteine persulfide (cysteine 398).

Belongs to the HCP family. It depends on [4Fe-4S] cluster as a cofactor. Requires hybrid [4Fe-2O-2S] cluster as cofactor.

It localises to the cytoplasm. The enzyme catalyses A + NH4(+) + H2O = hydroxylamine + AH2 + H(+). Its function is as follows. Catalyzes the reduction of hydroxylamine to form NH(3) and H(2)O. The polypeptide is Hydroxylamine reductase (Methanococcus vannielii (strain ATCC 35089 / DSM 1224 / JCM 13029 / OCM 148 / SB)).